Consider the following 106-residue polypeptide: UPF0145 protein PputW619_2377 (106 aa).

The protein belongs to the UPF0145 family.

This chain is UPF0145 protein PputW619_2377, found in Pseudomonas putida (strain W619).